The chain runs to 60 residues: Large ribosomal subunit protein uL30 (60 aa).

The protein belongs to the universal ribosomal protein uL30 family. As to quaternary structure, part of the 50S ribosomal subunit.

This Dehalococcoides mccartyi (strain ATCC BAA-2266 / KCTC 15142 / 195) (Dehalococcoides ethenogenes (strain 195)) protein is Large ribosomal subunit protein uL30.